The primary structure comprises 457 residues: CUB1 family protein C30C2.08 (457 aa).

Coiled-coil stretches lie at residues 119 to 174 (TQND…NISK) and 418 to 448 (QELVNSLLTQCHQLIEELRDEKHQHDIEERE).

The protein belongs to the CUB1 family.

The protein resides in the cytoplasm. The protein localises to the nucleus. Its function is as follows. Involved in bleomycin tolerance with links to DNA repair and/or proteasome function. The sequence is that of CUB1 family protein C30C2.08 from Schizosaccharomyces pombe (strain 972 / ATCC 24843) (Fission yeast).